Consider the following 87-residue polypeptide: HssA/B-like protein 58 (87 aa).

Polar residues predominate over residues 1-13 (MTILSAITSISRP). The tract at residues 1-31 (MTILSAITSISRPNKSSKSVISSNGGSSLSM) is disordered. The span at 14–31 (NKSSKSVISSNGGSSLSM) shows a compositional bias: low complexity.

The protein belongs to the hssA/B family.

The polypeptide is HssA/B-like protein 58 (hssl58) (Dictyostelium discoideum (Social amoeba)).